The sequence spans 501 residues: Aromatase 3 (501 aa).

Cysteine 435 is a heme binding site.

It belongs to the cytochrome P450 family. Requires heme as cofactor. As to expression, ovary.

The protein resides in the membrane. It catalyses the reaction testosterone + 3 reduced [NADPH--hemoprotein reductase] + 3 O2 = 17beta-estradiol + formate + 3 oxidized [NADPH--hemoprotein reductase] + 4 H2O + 4 H(+). The catalysed reaction is androst-4-ene-3,17-dione + 3 reduced [NADPH--hemoprotein reductase] + 3 O2 = estrone + formate + 3 oxidized [NADPH--hemoprotein reductase] + 4 H2O + 4 H(+). Catalyzes the formation of aromatic C18 estrogens from C19 androgens. This Sus scrofa (Pig) protein is Aromatase 3 (CYP19A3).